Here is a 301-residue protein sequence, read N- to C-terminus: N-acetylmuramic acid 6-phosphate etherase (301 aa).

The 161-residue stretch at 55-215 (IADALRAGGR…STISMVALGK (161 aa)) folds into the SIS domain. Glutamate 83 functions as the Proton donor in the catalytic mechanism. Glutamate 111 is a catalytic residue.

This sequence belongs to the GCKR-like family. MurNAc-6-P etherase subfamily. Homodimer.

The enzyme catalyses N-acetyl-D-muramate 6-phosphate + H2O = N-acetyl-D-glucosamine 6-phosphate + (R)-lactate. It participates in amino-sugar metabolism; 1,6-anhydro-N-acetylmuramate degradation. The protein operates within amino-sugar metabolism; N-acetylmuramate degradation. It functions in the pathway cell wall biogenesis; peptidoglycan recycling. Specifically catalyzes the cleavage of the D-lactyl ether substituent of MurNAc 6-phosphate, producing GlcNAc 6-phosphate and D-lactate. Together with AnmK, is also required for the utilization of anhydro-N-acetylmuramic acid (anhMurNAc) either imported from the medium or derived from its own cell wall murein, and thus plays a role in cell wall recycling. In Burkholderia lata (strain ATCC 17760 / DSM 23089 / LMG 22485 / NCIMB 9086 / R18194 / 383), this protein is N-acetylmuramic acid 6-phosphate etherase.